The following is a 907-amino-acid chain: Nuclear receptor coactivator 7 (907 aa).

Positions 1–12 (METKEEKKERRQ) are enriched in basic and acidic residues. A coiled-coil region spans residues 1–29 (METKEEKKERRQGYFARLKKKRQAKQNTE). 3 disordered regions span residues 1–51 (METK…DDES), 63–83 (DNCKFAGEKETVPEKEKRKKK), and 99–121 (YSTDDNQNKTNEKKEKKMVSQKP). Residues 25–41 (KQNTETVSANSPGSPVS) show a composition bias toward polar residues. 2 stretches are compositionally biased toward basic and acidic residues: residues 68 to 78 (AGEKETVPEKE) and 99 to 116 (YSTDDNQNKTNEKKEKKM). The LysM domain maps to 125–168 (IEYTAGNQDTINSIALKFNITPNKLVELNKLFTHTIVPGQILFV). 2 disordered regions span residues 335–373 (LSKEKRQQNGDSPNVPGAKQINPSDKEKSADFEVLQSSE) and 401–443 (DPHV…MDRG). Basic and acidic residues predominate over residues 401–422 (DPHVKEPSEEKNVSDIRTKEDS). The TLDc domain maps to 746–907 (ALLENMHIEQ…IQDVEVWTFE (162 aa)).

The protein belongs to the OXR1 family.

The protein resides in the nucleus. In terms of biological role, enhances the transcriptional activities of several nuclear receptors. This is Nuclear receptor coactivator 7 (NCOA7) from Gallus gallus (Chicken).